The following is a 308-amino-acid chain: Porphobilinogen deaminase (308 aa).

Cys240 bears the S-(dipyrrolylmethanemethyl)cysteine mark.

This sequence belongs to the HMBS family. Monomer. The cofactor is dipyrromethane.

The catalysed reaction is 4 porphobilinogen + H2O = hydroxymethylbilane + 4 NH4(+). It participates in porphyrin-containing compound metabolism; protoporphyrin-IX biosynthesis; coproporphyrinogen-III from 5-aminolevulinate: step 2/4. Its function is as follows. Tetrapolymerization of the monopyrrole PBG into the hydroxymethylbilane pre-uroporphyrinogen in several discrete steps. The polypeptide is Porphobilinogen deaminase (Campylobacter hominis (strain ATCC BAA-381 / DSM 21671 / CCUG 45161 / LMG 19568 / NCTC 13146 / CH001A)).